Reading from the N-terminus, the 133-residue chain is Small ribosomal subunit protein uS19 (133 aa).

This sequence belongs to the universal ribosomal protein uS19 family. As to quaternary structure, part of the 30S ribosomal subunit.

In terms of biological role, protein S19 forms a complex with S13 that binds strongly to the 16S ribosomal RNA. This is Small ribosomal subunit protein uS19 from Thermococcus kodakarensis (strain ATCC BAA-918 / JCM 12380 / KOD1) (Pyrococcus kodakaraensis (strain KOD1)).